The following is a 191-amino-acid chain: dCTP deaminase, dUMP-forming (191 aa).

Residues 101–106 (KSSLGR), aspartate 119, 127–129 (TLE), glutamine 148, tyrosine 162, and glutamine 174 each bind dCTP. The active-site Proton donor/acceptor is glutamate 129.

It belongs to the dCTP deaminase family. In terms of assembly, homotrimer.

The catalysed reaction is dCTP + 2 H2O = dUMP + NH4(+) + diphosphate. Its pathway is pyrimidine metabolism; dUMP biosynthesis; dUMP from dCTP: step 1/1. In terms of biological role, bifunctional enzyme that catalyzes both the deamination of dCTP to dUTP and the hydrolysis of dUTP to dUMP without releasing the toxic dUTP intermediate. This is dCTP deaminase, dUMP-forming from Streptomyces coelicolor (strain ATCC BAA-471 / A3(2) / M145).